We begin with the raw amino-acid sequence, 360 residues long: Peptide chain release factor 1 (360 aa).

N5-methylglutamine is present on glutamine 236.

The protein belongs to the prokaryotic/mitochondrial release factor family. In terms of processing, methylated by PrmC. Methylation increases the termination efficiency of RF1.

It is found in the cytoplasm. Functionally, peptide chain release factor 1 directs the termination of translation in response to the peptide chain termination codons UAG and UAA. The protein is Peptide chain release factor 1 of Methylococcus capsulatus (strain ATCC 33009 / NCIMB 11132 / Bath).